We begin with the raw amino-acid sequence, 379 residues long: MPAVTYEHIKTCKQSGARLGIVHTPHGSFETPMFMPVGTKATVKTMSPEELRQIEAKIILGNTYHLWLQPGNDIIKHAGGLHKFMNWDGPILTDSGGFQVFSLSNLRKITEEGVEFRHHTNGSKLFLSPEKSMQIQNDLGSDIMMAFDECPPMPAEYDYVKKSIERTTRWAKRCLDAHQRPEDQALFGIIQGGEYEDLREQSAKDLVELDFPGYAIGGLSVGEPKPVMYKMVEHTEQFMPKDKPRYLMGVGSPDALIECSIRGMDMFDCVLPTRIARNGTCMTSQGRLVIKNAKFADDLRPLDENCDCYTCQNYSRAYIRHLIKAEETFGIRLTTIHNLHFLLKLMEDIRQAIREDRLLDFKEEFFEQYGLNVENPKNF.

Aspartate 94 functions as the Proton acceptor in the catalytic mechanism. Substrate-binding positions include 94–98 (DSGGF), aspartate 148, glutamine 191, and glycine 218. Residues 249-255 (GVGSPDA) form an RNA binding region. Residue aspartate 268 is the Nucleophile of the active site. Residues 273–277 (TRIAR) are RNA binding; important for wobble base 34 recognition. The Zn(2+) site is built by cysteine 306, cysteine 308, cysteine 311, and histidine 337.

Belongs to the queuine tRNA-ribosyltransferase family. As to quaternary structure, homodimer. Within each dimer, one monomer is responsible for RNA recognition and catalysis, while the other monomer binds to the replacement base PreQ1. Zn(2+) serves as cofactor.

It catalyses the reaction 7-aminomethyl-7-carbaguanine + guanosine(34) in tRNA = 7-aminomethyl-7-carbaguanosine(34) in tRNA + guanine. The protein operates within tRNA modification; tRNA-queuosine biosynthesis. Its function is as follows. Catalyzes the base-exchange of a guanine (G) residue with the queuine precursor 7-aminomethyl-7-deazaguanine (PreQ1) at position 34 (anticodon wobble position) in tRNAs with GU(N) anticodons (tRNA-Asp, -Asn, -His and -Tyr). Catalysis occurs through a double-displacement mechanism. The nucleophile active site attacks the C1' of nucleotide 34 to detach the guanine base from the RNA, forming a covalent enzyme-RNA intermediate. The proton acceptor active site deprotonates the incoming PreQ1, allowing a nucleophilic attack on the C1' of the ribose to form the product. After dissociation, two additional enzymatic reactions on the tRNA convert PreQ1 to queuine (Q), resulting in the hypermodified nucleoside queuosine (7-(((4,5-cis-dihydroxy-2-cyclopenten-1-yl)amino)methyl)-7-deazaguanosine). The sequence is that of Queuine tRNA-ribosyltransferase from Staphylococcus aureus (strain Mu3 / ATCC 700698).